The following is a 461-amino-acid chain: ATP synthase subunit beta 2 (461 aa).

151 to 158 lines the ATP pocket; the sequence is GGAGVGKT.

The protein belongs to the ATPase alpha/beta chains family. As to quaternary structure, F-type ATPases have 2 components, CF(1) - the catalytic core - and CF(0) - the membrane proton channel. CF(1) has five subunits: alpha(3), beta(3), gamma(1), delta(1), epsilon(1). CF(0) has three main subunits: a(1), b(2) and c(9-12). The alpha and beta chains form an alternating ring which encloses part of the gamma chain. CF(1) is attached to CF(0) by a central stalk formed by the gamma and epsilon chains, while a peripheral stalk is formed by the delta and b chains.

The protein resides in the cell inner membrane. It catalyses the reaction ATP + H2O + 4 H(+)(in) = ADP + phosphate + 5 H(+)(out). In terms of biological role, produces ATP from ADP in the presence of a proton gradient across the membrane. The catalytic sites are hosted primarily by the beta subunits. This Vibrio campbellii (strain ATCC BAA-1116) protein is ATP synthase subunit beta 2.